The chain runs to 205 residues: MFIPILFLTLTLASADVMTLMESEPQPSTTESRPSMPPINSGKPSVTEKPGVELNPGETVKVKAEQFNTVNPVELKLEKRIPPGRVGSNCIDCAISNLPKAMFSVKVPKLNINFEVSDFPSSRLIFATLAQRVKSIPFIESLSFPSDIQRMQLRALGDVEVLIFIPKFGWKQILKLSDVVSGFDIPKIPSIAPKVESCVGDCLNS.

The segment at 23 to 52 (SEPQPSTTESRPSMPPINSGKPSVTEKPGV) is disordered.

The protein belongs to the cucumovirus/ilarvirus protein 2b family.

It is found in the host nucleus. Acts as a suppressor of RNA-mediated gene silencing, also known as post-transcriptional gene silencing (PTGS), a mechanism of plant viral defense that limits the accumulation of viral RNAs. May directly interfere with the mobile silencing signal. This chain is Suppressor of silencing 2b, found in Tobacco streak virus (strain WC) (TSV).